The chain runs to 295 residues: Cyclin-G1 (295 aa).

Belongs to the cyclin family. Cyclin G subfamily.

It is found in the nucleus. Its function is as follows. May play a role in growth regulation. Is associated with G2/M phase arrest in response to DNA damage. May be an intermediate by which p53 mediates its role as an inhibitor of cellular proliferation. This chain is Cyclin-G1 (CCNG1), found in Pongo abelii (Sumatran orangutan).